Here is a 232-residue protein sequence, read N- to C-terminus: U-scoloptoxin(11)-Sa3a (232 aa).

Residues 1 to 21 (MFQFCLLILLLAPGRFFSALG) form the signal peptide.

It belongs to the scoloptoxin-11 family. Post-translationally, contains 8 disulfide bonds. As to expression, expressed by the venom gland.

It is found in the secreted. In Scolopendra alternans (Florida Keys giant centipede), this protein is U-scoloptoxin(11)-Sa3a.